Here is a 43-residue protein sequence, read N- to C-terminus: Protein PsbN (43 aa).

A helical membrane pass occupies residues 5-27 (TLVAISISGSLVSFTGYALYTAF).

Belongs to the PsbN family.

It is found in the plastid. It localises to the chloroplast thylakoid membrane. Its function is as follows. May play a role in photosystem I and II biogenesis. In Drimys granadensis, this protein is Protein PsbN.